The sequence spans 167 residues: MAALSSRCPRSAAGPAYLQEAARSAHWASPPLVPLRTFQSSLFSSGSFHSREEEEEGVSLLRTALVGQGPVPLFLGSLFCAGCRQGPSVWSCGEPVPRRIWVTASVTPSPRQALHPCSDSLDILKALHLLPAAFSPFIWVQVFAEPSNKESRGENDGGEERESANIY.

The interval 148 to 167 is disordered; it reads NKESRGENDGGEERESANIY.

This is an uncharacterized protein from Homo sapiens (Human).